A 902-amino-acid chain; its full sequence is Nitrate reductase [NADPH] (902 aa).

Cys-182 provides a ligand contact to Mo-molybdopterin. The Cytochrome b5 heme-binding domain maps to 537–612 (LPLIFADEVA…LKKYCIGRCS (76 aa)). Heme-binding residues include His-572 and His-595. The region spanning 637–751 (RTKVPIVLIS…KGPLGHFTYY (115 aa)) is the FAD-binding FR-type domain. FAD-binding positions include 689–692 (RAYT), 708–712 (LIKVY), Phe-713, 725–727 (LFS), and Thr-778. Position 872 to 879 (872 to 879 (CMCGPEGM)) interacts with NADP(+).

Belongs to the nitrate reductase family. Homodimer. FAD is required as a cofactor. It depends on heme as a cofactor. Requires Mo-molybdopterin as cofactor.

The enzyme catalyses nitrite + NADP(+) + H2O = nitrate + NADPH + H(+). Functionally, nitrate reductase is a key enzyme involved in the first step of nitrate assimilation in plants, fungi and bacteria. This Phytophthora infestans (Potato late blight agent) protein is Nitrate reductase [NADPH] (NIAA).